Reading from the N-terminus, the 820-residue chain is DNA mismatch repair protein MutS (820 aa).

615 to 622 (GPNMAGKS) is an ATP binding site.

It belongs to the DNA mismatch repair MutS family.

Its function is as follows. This protein is involved in the repair of mismatches in DNA. It is possible that it carries out the mismatch recognition step. This protein has a weak ATPase activity. The polypeptide is DNA mismatch repair protein MutS (Anaplasma phagocytophilum (strain HZ)).